The primary structure comprises 473 residues: H(+)/Cl(-) exchange transporter ClcA (473 aa).

The Cytoplasmic portion of the chain corresponds to 1–32 (MKTDTSTFLAQQIVRLRRRDQIRRLMQRDKTP). Residues 33–69 (LAILFMAAVVGTLTGLVGVAFEKAVSWVQNMRIGALV) traverse the membrane as a helical segment. Residues 70-76 (QVADHAF) are Periplasmic-facing. Residues 77 to 100 (LLWPLAFILSALLAMVGYFLVRKF) form a helical membrane-spanning segment. The Selectivity filter part_1 signature appears at 106 to 110 (GSGIP). Serine 107 contributes to the chloride binding site. Positions 109–116 (IPEIEGAL) form an intramembrane region, helical. Residues 117 to 123 (EELRPVR) lie on the Cytoplasmic side of the membrane. The next 2 membrane-spanning stretches (helical) occupy residues 124 to 141 (WWRVLPVKFIGGMGTLGA) and 148 to 166 (EGPTVQIGGNLGRMVLDVF). A Selectivity filter part_2 motif is present at residues 146-150 (GREGP). Residues 167-176 (RMRSAEARHT) are Cytoplasmic-facing. Intramembrane regions (helical) lie at residues 177–189 (LLATGAAAGLSAA) and 193–201 (PLAGILFII). Over 202–214 (EEMRPQFRYNLIS) the chain is Cytoplasmic. A helical transmembrane segment spans residues 215–232 (IKAVFTGVIMSSIVFRIF). Topologically, residues 233–252 (NGEAPIIEVGKLSDAPVNTL) are periplasmic. A helical membrane pass occupies residues 253–281 (WLYLILGIIFGCVGPVFNSLVLRTQDMFQ). At 282–287 (RFHGGE) the chain is on the cytoplasmic side. Residues 288–309 (IKKWVLMGGAIGGLCGILGLIE) form a helical membrane-spanning segment. The Periplasmic portion of the chain corresponds to 310–329 (PEAAGGGFNLIPIAAAGNFS). 2 helical membrane-spanning segments follow: residues 330-349 (VGLLLFIFITRVVTTLLCFS) and 355-376 (GIFAPMLALGTLLGTAFGMAAA). The short motif at 355-359 (GIFAP) is the Selectivity filter part_3 element. Residues isoleucine 356 and phenylalanine 357 each coordinate chloride. Residues 377 to 386 (VLFPQYHLEA) lie on the Periplasmic side of the membrane. Residues 387 to 401 (GTFAIAGMGALMAAS) constitute an intramembrane region (helical). An intramembrane region (note=Loop between two helices) is located at residues 402–404 (VRA). The segment at residues 405–416 (PLTGIVLVLEMT) is an intramembrane region (helical). The note=Loop between two helices intramembrane region spans 417-421 (DNYQL). The chain crosses the membrane as a helical span at residues 422 to 438 (ILPMIITCLGATLLAQF). At 439-473 (LGGKPLYSTILARTLAKQDAEQAAKNQNASAGENT) the chain is on the cytoplasmic side. A chloride-binding site is contributed by tyrosine 445.

This sequence belongs to the chloride channel (TC 2.A.49) family. ClcA subfamily. Homodimer.

It is found in the cell inner membrane. The catalysed reaction is 2 chloride(in) + H(+)(out) = 2 chloride(out) + H(+)(in). Functionally, proton-coupled chloride transporter. Functions as antiport system and exchanges two chloride ions for 1 proton. Probably acts as an electrical shunt for an outwardly-directed proton pump that is linked to amino acid decarboxylation, as part of the extreme acid resistance (XAR) response. The polypeptide is H(+)/Cl(-) exchange transporter ClcA (Salmonella choleraesuis (strain SC-B67)).